We begin with the raw amino-acid sequence, 147 residues long: Putative 2'-deoxynucleoside 5'-phosphate N-hydrolase 1 (147 aa).

Residues 10 to 16 (YFCGSIR), tyrosine 25, histidine 42, glutamate 90, and 114 to 116 (SAM) each bind substrate.

This sequence belongs to the 2'-deoxynucleoside 5'-phosphate N-hydrolase 1 family. In terms of assembly, monomer and homodimer.

Its subcellular location is the cytoplasm. It localises to the nucleus. The catalysed reaction is a pyrimidine 2'-deoxyribonucleoside 5'-phosphate + H2O = a pyrimidine nucleobase + 2-deoxy-D-ribose 5-phosphate. It catalyses the reaction a purine 2'-deoxyribonucleoside 5'-phosphate + H2O = a purine nucleobase + 2-deoxy-D-ribose 5-phosphate. Its function is as follows. Catalyzes the cleavage of the N-glycosidic bond of deoxyribonucleoside 5'-monophosphates to yield deoxyribose 5-phosphate and a purine or pyrimidine base. This chain is Putative 2'-deoxynucleoside 5'-phosphate N-hydrolase 1, found in Nematostella vectensis (Starlet sea anemone).